Here is a 333-residue protein sequence, read N- to C-terminus: MIDTTLPLTDIHRHLDGNIRPQTILELGRQYNISLPAQSLETLIPHVQVIANEPDLVSFLTKLDWGVKVLASLDACRRVAFENIEDAARHGLHYVELRFSPGYMAMAHQLPVAGVVEAVIDGVREGCRTFGVQAKLIGIMSRTFGEAACQQELEAFLAHRDQITALDLAGDELGFPGSLFLSHFNRARDAGWHITVHAGEAAGPESIWQAIRELGAERIGHGVKAIEDRALMDFLAEQQIGIESCLTSNIQTSSVAELAAHPLKTFLEHGIRASINTDDPGVQGVDIIHEYTVAAPAAGLSREQIRQAQINGLEMAFLSAEEKRALREKVAAK.

Residues histidine 12 and histidine 14 each contribute to the Zn(2+) site. Positions 14, 16, and 170 each coordinate substrate. Histidine 197 is a Zn(2+) binding site. Glutamate 200 (proton donor) is an active-site residue. Aspartate 278 contributes to the Zn(2+) binding site. Aspartate 279 lines the substrate pocket.

This sequence belongs to the metallo-dependent hydrolases superfamily. Adenosine and AMP deaminases family. Adenosine deaminase subfamily. The cofactor is Zn(2+).

The catalysed reaction is adenosine + H2O + H(+) = inosine + NH4(+). It carries out the reaction 2'-deoxyadenosine + H2O + H(+) = 2'-deoxyinosine + NH4(+). Catalyzes the hydrolytic deamination of adenosine and 2-deoxyadenosine. The sequence is that of Adenosine deaminase from Escherichia coli (strain SE11).